A 310-amino-acid polypeptide reads, in one-letter code: L-lactate dehydrogenase (310 aa).

Residues Val11, Asp32, Tyr62, and 76-77 (GV) contribute to the NAD(+) site. Residues Gln79, Arg85, and 117–120 (NPVD) each bind substrate. NAD(+) is bound by residues 115–117 (ASN) and Ser140. 145 to 148 (DTAR) serves as a coordination point for substrate. Residues Arg150 and His165 each coordinate beta-D-fructose 1,6-bisphosphate. Residue His172 is the Proton acceptor of the active site. A substrate-binding site is contributed by Thr227.

This sequence belongs to the LDH/MDH superfamily. LDH family. In terms of assembly, homotetramer.

Its subcellular location is the cytoplasm. It carries out the reaction (S)-lactate + NAD(+) = pyruvate + NADH + H(+). Its pathway is fermentation; pyruvate fermentation to lactate; (S)-lactate from pyruvate: step 1/1. Its activity is regulated as follows. Allosterically activated by fructose 1,6-bisphosphate (FBP). Catalyzes the conversion of lactate to pyruvate. The protein is L-lactate dehydrogenase of Allorhizobium ampelinum (strain ATCC BAA-846 / DSM 112012 / S4) (Agrobacterium vitis (strain S4)).